Consider the following 165-residue polypeptide: Large ribosomal subunit protein uL15 (165 aa).

The interval 1–44 is disordered; it reads MSLNQLKAPRGANRAKKRVGRGQGSGLGKTAGRGGKGQKARSGN. Residues 21-37 show a composition bias toward gly residues; that stretch reads RGQGSGLGKTAGRGGKG.

It belongs to the universal ribosomal protein uL15 family. Part of the 50S ribosomal subunit.

In terms of biological role, binds to the 23S rRNA. The polypeptide is Large ribosomal subunit protein uL15 (Anaeromyxobacter dehalogenans (strain 2CP-1 / ATCC BAA-258)).